The following is a 389-amino-acid chain: Gastricsin (389 aa).

Positions 1 to 16 (MKWMVVVLLCLQLLEA) are cleaved as a signal peptide. The propeptide at 17 to 59 (KVVKVPLKKLKSLRETMKEKGLLEEFLKNHKYDPAQKYRYTDF) is activation peptide. The 314-residue stretch at 73 to 386 (YFGEISIGTP…DMGNNRVGFA (314 aa)) folds into the Peptidase A1 domain. Asp91 is an active-site residue. Disulfide bonds link Cys104-Cys109 and Cys268-Cys272. Asp277 is a catalytic residue. The cysteines at positions 311 and 344 are disulfide-linked.

This sequence belongs to the peptidase A1 family.

Its subcellular location is the secreted. The enzyme catalyses More restricted specificity than pepsin A, but shows preferential cleavage at Tyr-|-Xaa bonds. High activity on hemoglobin.. Its function is as follows. Hydrolyzes a variety of proteins. The sequence is that of Gastricsin (PGC) from Rhinolophus ferrumequinum (Greater horseshoe bat).